We begin with the raw amino-acid sequence, 532 residues long: Exopolysaccharide phosphotransferase CpsY (532 aa).

This sequence belongs to the stealth family.

The chain is Exopolysaccharide phosphotransferase CpsY (cpsY) from Mycobacterium bovis (strain ATCC BAA-935 / AF2122/97).